The sequence spans 185 residues: Putative gustatory receptor clone PTE01 (185 aa).

Residues 1–11 form a helical membrane-spanning segment; sequence MYLFLSNLSLA. Residues 12 to 42 lie on the Extracellular side of the membrane; the sequence is DISFTSTTLPKMIVDIQTNNRAISYSGCLTQ. The chain crosses the membrane as a helical span at residues 43–62; sequence MSFFMLFGCLDSLLLTAMAY. The Cytoplasmic segment spans residues 63–84; that stretch reads DRFVAICHPLHYQVIMNPRLCG. A helical transmembrane segment spans residues 85–105; sequence LLVFLSILISLLVSQLHNSVV. Residues 106-138 lie on the Extracellular side of the membrane; that stretch reads LQLTYFKSVDISHFFCDPSLLLNLACSDTFTNN. A helical membrane pass occupies residues 139–160; that stretch reads IVMYFVGAISGFLPISGIFFSY. Topologically, residues 161-182 are cytoplasmic; the sequence is YKIVSSILRMPSPGGKYKAFST. The chain crosses the membrane as a helical span at residues 183–185; the sequence is CGS.

This sequence belongs to the G-protein coupled receptor 1 family. In terms of tissue distribution, tongue specific.

It localises to the cell membrane. Its function is as follows. Possible taste receptor. The protein is Putative gustatory receptor clone PTE01 of Rattus norvegicus (Rat).